The following is a 93-amino-acid chain: Protein Tat (93 aa).

The segment at 1–24 (MEPVDPELEPWNHPGSQPKTACNN) is interaction with human CREBBP. A transactivation region spans residues 1-48 (MEPVDPELEPWNHPGSQPKTACNNCHCKVCCYHCVYCFTKKGLGISYG). Zn(2+) is bound by residues Cys22, Cys25, and Cys27. The tract at residues 22–37 (CNNCHCKVCCYHCVYC) is cysteine-rich. N6-acetyllysine; by host PCAF is present on Lys28. Zn(2+)-binding residues include Cys30, His33, Cys34, and Cys37. The tract at residues 38 to 48 (FTKKGLGISYG) is core. The segment covering 48–58 (GRKKRSQRRRT) has biased composition (basic residues). The disordered stretch occupies residues 48 to 93 (GRKKRSQRRRTPQSNKSHQDPLPKQPLSQRLGDQTGQKEQKKTLES). The Nuclear localization signal, RNA-binding (TAR), and protein transduction motif lies at 49-57 (RKKRSQRRR). Positions 49–86 (RKKRSQRRRTPQSNKSHQDPLPKQPLSQRLGDQTGQKE) are interaction with the host capping enzyme RNGTT. Residues Lys50 and Lys51 each carry the N6-acetyllysine; by host EP300 and GCN5L2 modification. The residue at position 52 (Arg52) is an Asymmetric dimethylarginine; by host PRMT6. Lys71 participates in a covalent cross-link: Glycyl lysine isopeptide (Lys-Gly) (interchain with G-Cter in ubiquitin). Positions 73 to 82 (PLSQRLGDQT) are enriched in polar residues. Positions 83–93 (GQKEQKKTLES) are enriched in basic and acidic residues.

It belongs to the lentiviruses Tat family. In terms of assembly, interacts with host CCNT1. Associates with the P-TEFb complex composed at least of Tat, P-TEFb (CDK9 and CCNT1), TAR RNA, RNA Pol II. Recruits the HATs CREBBP, TAF1/TFIID, EP300, PCAF and GCN5L2. Interacts with host KAT5/Tip60; this interaction targets the latter to degradation. Interacts with the host deacetylase SIRT1. Interacts with host capping enzyme RNGTT; this interaction stimulates RNGTT. Binds to host KDR, and to the host integrins ITGAV/ITGB3 and ITGA5/ITGB1. Interacts with host KPNB1/importin beta-1 without previous binding to KPNA1/importin alpha-1. Interacts with EIF2AK2. Interacts with host nucleosome assembly protein NAP1L1; this interaction may be required for the transport of Tat within the nucleus, since the two proteins interact at the nuclear rim. Interacts with host C1QBP/SF2P32; this interaction involves lysine-acetylated Tat. Interacts with the host chemokine receptors CCR2, CCR3 and CXCR4. Interacts with host DPP4/CD26; this interaction may trigger an anti-proliferative effect. Interacts with host LDLR. Interacts with the host extracellular matrix metalloproteinase MMP1. Interacts with host PRMT6; this interaction mediates Tat's methylation. Interacts with, and is ubiquitinated by MDM2/Hdm2. Interacts with host PSMC3 and HTATIP2. Interacts with STAB1; this interaction may overcome SATB1-mediated repression of IL2 and IL2RA (interleukin) in T cells by binding to the same domain than HDAC1. Interacts (when acetylated) with human CDK13, thereby increasing HIV-1 mRNA splicing and promoting the production of the doubly spliced HIV-1 protein Nef. Interacts with host TBP; this interaction modulates the activity of transcriptional pre-initiation complex. Interacts with host RELA. Post-translationally, asymmetrical arginine methylation by host PRMT6 seems to diminish the transactivation capacity of Tat and affects the interaction with host CCNT1. In terms of processing, acetylation by EP300, CREBBP, GCN5L2/GCN5 and PCAF regulates the transactivation activity of Tat. EP300-mediated acetylation of Lys-50 promotes dissociation of Tat from the TAR RNA through the competitive binding to PCAF's bromodomain. In addition, the non-acetylated Tat's N-terminus can also interact with PCAF. PCAF-mediated acetylation of Lys-28 enhances Tat's binding to CCNT1. Lys-50 is deacetylated by SIRT1. Polyubiquitination by host MDM2 does not target Tat to degradation, but activates its transactivation function and fosters interaction with CCNT1 and TAR RNA. Post-translationally, phosphorylated by EIF2AK2 on serine and threonine residues adjacent to the basic region important for TAR RNA binding and function. Phosphorylation of Tat by EIF2AK2 is dependent on the prior activation of EIF2AK2 by dsRNA.

The protein localises to the host nucleus. It localises to the host nucleolus. Its subcellular location is the host cytoplasm. The protein resides in the secreted. In terms of biological role, transcriptional activator that increases RNA Pol II processivity, thereby increasing the level of full-length viral transcripts. Recognizes a hairpin structure at the 5'-LTR of the nascent viral mRNAs referred to as the transactivation responsive RNA element (TAR) and recruits the cyclin T1-CDK9 complex (P-TEFb complex) that will in turn hyperphosphorylate the RNA polymerase II to allow efficient elongation. The CDK9 component of P-TEFb and other Tat-activated kinases hyperphosphorylate the C-terminus of RNA Pol II that becomes stabilized and much more processive. Other factors such as HTATSF1/Tat-SF1, SUPT5H/SPT5, and HTATIP2 are also important for Tat's function. Besides its effect on RNA Pol II processivity, Tat induces chromatin remodeling of proviral genes by recruiting the histone acetyltransferases (HATs) CREBBP, EP300 and PCAF to the chromatin. This also contributes to the increase in proviral transcription rate, especially when the provirus integrates in transcriptionally silent region of the host genome. To ensure maximal activation of the LTR, Tat mediates nuclear translocation of NF-kappa-B by interacting with host RELA. Through its interaction with host TBP, Tat may also modulate transcription initiation. Tat can reactivate a latently infected cell by penetrating in it and transactivating its LTR promoter. In the cytoplasm, Tat is thought to act as a translational activator of HIV-1 mRNAs. Its function is as follows. Extracellular circulating Tat can be endocytosed by surrounding uninfected cells via the binding to several surface receptors such as CD26, CXCR4, heparan sulfate proteoglycans (HSPG) or LDLR. Neurons are rarely infected, but they internalize Tat via their LDLR. Through its interaction with nuclear HATs, Tat is potentially able to control the acetylation-dependent cellular gene expression. Modulates the expression of many cellular genes involved in cell survival, proliferation or in coding for cytokines or cytokine receptors. Tat plays a role in T-cell and neurons apoptosis. Tat induced neurotoxicity and apoptosis probably contribute to neuroAIDS. Circulating Tat also acts as a chemokine-like and/or growth factor-like molecule that binds to specific receptors on the surface of the cells, affecting many cellular pathways. In the vascular system, Tat binds to ITGAV/ITGB3 and ITGA5/ITGB1 integrins dimers at the surface of endothelial cells and competes with bFGF for heparin-binding sites, leading to an excess of soluble bFGF. This Pan troglodytes (Chimpanzee) protein is Protein Tat.